Reading from the N-terminus, the 167-residue chain is Leptin (167 aa).

The N-terminal stretch at 1–21 (MCWRPLCRFLWLWSYLSYVQA) is a signal peptide. A disulfide bridge links Cys-117 with Cys-167.

This sequence belongs to the leptin family.

The protein localises to the secreted. Its function is as follows. Key player in the regulation of energy balance and body weight control. Once released into the circulation, has central and peripheral effects by binding LEPR, found in many tissues, which results in the activation of several major signaling pathways. In the hypothalamus, acts as an appetite-regulating factor that induces a decrease in food intake and an increase in energy consumption by inducing anorexinogenic factors and suppressing orexigenic neuropeptides, also regulates bone mass and secretion of hypothalamo-pituitary-adrenal hormones. In the periphery, increases basal metabolism, influences reproductive function, regulates pancreatic beta-cell function and insulin secretion, is pro-angiogenic for endothelial cell and affects innate and adaptive immunity. In the arcuate nucleus of the hypothalamus, activates by depolarization POMC neurons inducing FOS and SOCS3 expression to release anorexigenic peptides and inhibits by hyperpolarization NPY neurons inducing SOCS3 with a consequent reduction on release of orexigenic peptides. In addition to its known satiety inducing effect, has a modulatory role in nutrient absorption. In the intestine, reduces glucose absorption by enterocytes by activating PKC and leading to a sequential activation of p38, PI3K and ERK signaling pathways which exerts an inhibitory effect on glucose absorption. Acts as a growth factor on certain tissues, through the activation of different signaling pathways increases expression of genes involved in cell cycle regulation such as CCND1, via JAK2-STAT3 pathway, or VEGFA, via MAPK1/3 and PI3K-AKT1 pathways. May also play an apoptotic role via JAK2-STAT3 pathway and up-regulation of BIRC5 expression. Pro-angiogenic, has mitogenic activity on vascular endothelial cells and plays a role in matrix remodeling by regulating the expression of matrix metalloproteinases (MMPs) and tissue inhibitors of metalloproteinases (TIMPs). In innate immunity, modulates the activity and function of neutrophils by increasing chemotaxis and the secretion of oxygen radicals. Increases phagocytosis by macrophages and enhances secretion of pro-inflammatory mediators. Increases cytotoxic ability of NK cells. Plays a pro-inflammatory role, in synergy with IL1B, by inducing NOS2 which promotes the production of IL6, IL8 and Prostaglandin E2, through a signaling pathway that involves JAK2, PI3K, MAP2K1/MEK1 and MAPK14/p38. In adaptive immunity, promotes the switch of memory T-cells towards T helper-1 cell immune responses. Increases CD4(+)CD25(-) T cells proliferation and reduces autophagy during TCR (T cell receptor) stimulation, through MTOR signaling pathway activation and BCL2 up-regulation. In Mus musculus (Mouse), this protein is Leptin (Lep).